Consider the following 230-residue polypeptide: Orotidine 5'-phosphate decarboxylase (230 aa).

Substrate contacts are provided by residues Asp11, Lys34, 61-70, Thr117, Arg179, Gln188, Gly208, and Arg209; that span reads DLKLHDIPNT. The Proton donor role is filled by Lys63.

The protein belongs to the OMP decarboxylase family. Type 1 subfamily. As to quaternary structure, homodimer.

The catalysed reaction is orotidine 5'-phosphate + H(+) = UMP + CO2. It participates in pyrimidine metabolism; UMP biosynthesis via de novo pathway; UMP from orotate: step 2/2. Functionally, catalyzes the decarboxylation of orotidine 5'-monophosphate (OMP) to uridine 5'-monophosphate (UMP). This Streptococcus mutans serotype c (strain ATCC 700610 / UA159) protein is Orotidine 5'-phosphate decarboxylase.